A 431-amino-acid chain; its full sequence is Enolase (431 aa).

Glutamine 166 provides a ligand contact to (2R)-2-phosphoglycerate. Residue glutamate 208 is the Proton donor of the active site. Aspartate 245, glutamate 288, and aspartate 315 together coordinate Mg(2+). (2R)-2-phosphoglycerate is bound by residues lysine 340, arginine 369, serine 370, and lysine 391. Catalysis depends on lysine 340, which acts as the Proton acceptor.

Belongs to the enolase family. Requires Mg(2+) as cofactor.

The protein resides in the cytoplasm. It is found in the secreted. Its subcellular location is the cell surface. The enzyme catalyses (2R)-2-phosphoglycerate = phosphoenolpyruvate + H2O. Its pathway is carbohydrate degradation; glycolysis; pyruvate from D-glyceraldehyde 3-phosphate: step 4/5. Functionally, catalyzes the reversible conversion of 2-phosphoglycerate (2-PG) into phosphoenolpyruvate (PEP). It is essential for the degradation of carbohydrates via glycolysis. This Clostridium botulinum (strain Okra / Type B1) protein is Enolase.